A 190-amino-acid chain; its full sequence is MANLRTQKRLAASVIGVGKRKVWLDPNETTEIANANSRSAIRKLYKNGTIVKKPETVHSRSRARALKESKRAGRHMGYGKRKGTKDARMPSQVLWMRRLRVLRKLLAKYRDAGKIDKHLYHNLYKAAKGNTFKHKRSLVEHIIAAKAEALREKALKEEAEARRVRNRAARERRQQRLAEKKEALFAEAAN.

2 disordered regions span residues 56–85 (TVHSRSRARALKESKRAGRHMGYGKRKGTK) and 166–190 (NRAARERRQQRLAEKKEALFAEAAN). Basic residues predominate over residues 72–83 (AGRHMGYGKRKG). Positions 166-184 (NRAARERRQQRLAEKKEAL) are enriched in basic and acidic residues.

This sequence belongs to the eukaryotic ribosomal protein eL19 family. Component of the large ribosomal subunit. Mature ribosomes consist of a small (40S) and a large (60S) subunit. The 40S subunit contains about 32 different proteins and 1 molecule of RNA (18S). The 60S subunit contains 45 different proteins and 3 molecules of RNA (25S, 5.8S and 5S).

Its subcellular location is the cytoplasm. Component of the ribosome, a large ribonucleoprotein complex responsible for the synthesis of proteins in the cell. The small ribosomal subunit (SSU) binds messenger RNAs (mRNAs) and translates the encoded message by selecting cognate aminoacyl-transfer RNA (tRNA) molecules. The large subunit (LSU) contains the ribosomal catalytic site termed the peptidyl transferase center (PTC), which catalyzes the formation of peptide bonds, thereby polymerizing the amino acids delivered by tRNAs into a polypeptide chain. The nascent polypeptides leave the ribosome through a tunnel in the LSU and interact with protein factors that function in enzymatic processing, targeting, and the membrane insertion of nascent chains at the exit of the ribosomal tunnel. RPL19A may play a role in the last stages of translation initiation, in particular subunit joining and shedding/releasing factors. The protein is Large ribosomal subunit protein eL19 of Candida albicans (strain SC5314 / ATCC MYA-2876) (Yeast).